A 500-amino-acid polypeptide reads, in one-letter code: Serine carboxypeptidase 3 (500 aa).

Positions 1–21 (MATTPRLASLLLLLALCAAAA) are cleaved as a signal peptide. Positions 22-73 (GALRLPPDASFPGAQAERLIRALNLLPGRPRRGLGAGAEDVAPGQLLERRVT) are excised as a propeptide. Cystine bridges form between C126–C366, C294–C309, and C332–C337. N144 carries N-linked (GlcNAc...) asparagine glycosylation. The active site involves S216. Residue D404 is part of the active site. C407 is a substrate binding site. Residue H461 is part of the active site. Positions 485–500 (ESVPEEEPATTFYAAI) are excised as a propeptide.

The protein belongs to the peptidase S10 family. As to quaternary structure, monomer.

The enzyme catalyses Release of a C-terminal amino acid with broad specificity.. This Triticum aestivum (Wheat) protein is Serine carboxypeptidase 3 (CBP3).